A 628-amino-acid polypeptide reads, in one-letter code: LRR receptor kinase SERK2 (628 aa).

The signal sequence occupies residues 1–31 (MAEARLLRRRRLCLAVPFVWVVAVAVSRVGA). LRR repeat units lie at residues 97–121 (LKNL…LGNL), 123–144 (NLVS…TLGQ), 145–169 (LYKL…LTNI), and 170–194 (TTLQ…SFSL). N-linked (GlcNAc...) asparagine glycosylation is found at N109, N120, N133, N155, N168, and N181. The chain crosses the membrane as a helical span at residues 243 to 263 (AIAGGVAAAAALLFAVPAIGF). A Phosphothreonine modification is found at T303. One can recognise a Protein kinase domain in the interval 306-593 (FSNKNILGRG…GLAERWEEWQ (288 aa)). 312–320 (LGRGGFGKV) lines the ATP pocket. Residue S329 is modified to Phosphoserine. K334 lines the ATP pocket. The residue at position 350 (T350) is a Phosphothreonine. A phosphoserine mark is found at S356 and S387. Residue D433 is the Proton acceptor of the active site. 3 positions are modified to phosphothreonine: T463, T466, and T472. Residue S615 is modified to Phosphoserine. The residue at position 616 (T616) is a Phosphothreonine. Position 625 is a phosphoserine (S625).

This sequence belongs to the protein kinase superfamily. Ser/Thr protein kinase family. Interacts with BRI1. Interacts with XA21, XA26/XA3 and FLS2. In terms of processing, autophosphorylated on serine and threonine residues. Expressed in flag leaves. Expressed in roots, shoot apex, leaf blades, leaf sheaths, panicles and flowers. Expressed leaves, stems, sheaths and flowers.

It localises to the cell membrane. It carries out the reaction L-seryl-[protein] + ATP = O-phospho-L-seryl-[protein] + ADP + H(+). The enzyme catalyses L-threonyl-[protein] + ATP = O-phospho-L-threonyl-[protein] + ADP + H(+). In terms of biological role, LRR receptor kinase involved in positive regulation of somatic embryogenesis and defense response against the rice blast fungus pathogen Magnaporthe oryzae. Involved in the positive regulation of receptor kinase-mediated immunity. Required for immunity mediated by the LRR receptor kinases XA21 and XA26/XA3 which recognize effectors from the bacterial pathogen Xanthomonas oryzae pv. oryzae (Xoo). Required for the immune response mediated by the LRR receptor kinase FLS2 which recognizes specifically the bacterial flagellin (flg22) effector. Kinase activity and direct interaction with the immune receptors is critical for their function. Involved in the regulation of plant growth through the brassinosteroid (BR) signaling pathway. This Oryza sativa subsp. japonica (Rice) protein is LRR receptor kinase SERK2.